Reading from the N-terminus, the 74-residue chain is Antimicrobial peptide AcrAP1 (74 aa).

A signal peptide spans 1 to 22; that stretch reads MEIKYLLTVFLVLLIVSDHCQA. Lysine 40 is subject to Lysine amide. Positions 46 to 74 are excised as a propeptide; sequence DLDGQIDRFRNFRKRDAELEELLSKLPIY.

It belongs to the non-disulfide-bridged peptide (NDBP) superfamily. Short antimicrobial peptide (group 4) family. In terms of tissue distribution, expressed by the venom gland.

The protein localises to the secreted. It is found in the target cell membrane. Functionally, has antimicrobial activity against the Gram-positive bacteria S.aureus (MIC=8 uM) and the yeast C.albicans (MIC=16 uM). Causes hemolysis on horse erythrocytes (64 uM for 100% hemolysis). Minimum bactericidal concentrations have also been tested against S.aureus and is four-fold higher (MBC=32 uM). This Androctonus crassicauda (Arabian fat-tailed scorpion) protein is Antimicrobial peptide AcrAP1.